The following is a 753-amino-acid chain: Replication restart protein PriA (753 aa).

The Helicase ATP-binding domain occupies 228–395; sequence SLITTKFQTC…LSKKYTLSVL (168 aa). Residue 241 to 248 participates in ATP binding; that stretch reads GVTGSGKT. The short motif at 337-340 is the DEAH box element; that stretch reads DEEH. Cys458, Cys461, Cys467, Cys470, Cys485, Cys488, Cys499, and Cys502 together coordinate Zn(2+). The 156-residue stretch at 491 to 646 folds into the Helicase C-terminal domain; the sequence is RLSKPITSCP…DFPAFYKEEI (156 aa).

Belongs to the helicase family. PriA subfamily. Component of the replication restart primosome. Requires Zn(2+) as cofactor.

The catalysed reaction is Couples ATP hydrolysis with the unwinding of duplex DNA by translocating in the 3'-5' direction.. The enzyme catalyses ATP + H2O = ADP + phosphate + H(+). Its function is as follows. Initiates the restart of stalled replication forks, which reloads the replicative helicase on sites other than the origin of replication. Recognizes and binds to abandoned replication forks and remodels them to uncover a helicase loading site. Promotes assembly of the primosome at these replication forks. This Chlamydia muridarum (strain MoPn / Nigg) protein is Replication restart protein PriA.